The chain runs to 1700 residues: Balbiani ring protein 3 (1700 aa).

The first 20 residues, 1 to 20 (MKTLSSLLLVLAVNVLLIQA), serve as a signal peptide directing secretion.

As to expression, salivary gland.

The protein resides in the secreted. Functionally, used by the larvae to construct a supramolecular structure, the larval tube. Balbiani ring protein 3 could play a role as a transport protein that binds to other proteins intracellularly and in the gland lumen in order to prevent these from forming water-insoluble fibers too early. This is Balbiani ring protein 3 (BR3) from Chironomus tentans (Midge).